A 483-amino-acid polypeptide reads, in one-letter code: UDP-N-acetylmuramate--L-alanine ligase (483 aa).

Position 128–134 (128–134) interacts with ATP; that stretch reads GTHGKTT.

Belongs to the MurCDEF family.

Its subcellular location is the cytoplasm. The catalysed reaction is UDP-N-acetyl-alpha-D-muramate + L-alanine + ATP = UDP-N-acetyl-alpha-D-muramoyl-L-alanine + ADP + phosphate + H(+). Its pathway is cell wall biogenesis; peptidoglycan biosynthesis. Its function is as follows. Cell wall formation. This chain is UDP-N-acetylmuramate--L-alanine ligase, found in Shewanella violacea (strain JCM 10179 / CIP 106290 / LMG 19151 / DSS12).